The sequence spans 278 residues: uncharacterized protein (278 aa).

Topologically, residues 1–34 (MAKTIKVIRKKDPKKKNLSDPLAKQKLVWKIGHV) are cytoplasmic. The helical transmembrane segment at 35–55 (LTLVFGLLFSITYFYHVLIFF) threads the bilayer. The Extracellular segment spans residues 56 to 129 (KYRSWKWLFL…DLLSSENFHT (74 aa)). A helical transmembrane segment spans residues 130-150 (LLIACLWFFGGGKSFYKILPY). At 151–180 (MILSYLHLTKMNYELNANKEEKIPLTPKDR) the chain is on the cytoplasmic side. A helical transmembrane segment spans residues 181–201 (KMLHLLAYSELLVILALTLDT). At 202–205 (ILFK) the chain is on the extracellular side. Residues 206 to 222 (TGTSGFMLVIYVGIYWL) traverse the membrane as a helical segment. Residues 223–278 (RLNFSPYAQVAVLELLVKFEKYVPKKYRDKWQVIKNFIYMKMKEHEKRTEEVARYA) are Cytoplasmic-facing.

It is found in the cell membrane. This is an uncharacterized protein from Saccharomyces cerevisiae (strain ATCC 204508 / S288c) (Baker's yeast).